The chain runs to 277 residues: MSSGMHVALVTGGNKGIGLAIVRDLCRLFSGDVVLTARDVARGQAAVQQLQAEGLSPRFHQLDIDDLQSIRALRDFLRKEYGGLDVLVNNAGIAFKVADPTPFHIQAEVTMKTNFFGTRDVCTELLPLIKPQGRVVNVSSIMSVRALKSCSPELQQKFRSETITEEELVGLMNKFVEDTKKGVHQKEGWPSSAYGVTKIGVTVLSRIHARKLSEQRKGDRILLNACCPGWVRTDMAGPKATKSPEEGAETPVYLALLPPDAEGPHGQFVSEKRVEQW.

Serine 2 bears the N-acetylserine mark. Residues serine 2 and serine 30 each carry the phosphoserine modification. NADP(+) contacts are provided by residues 10–34, 63–64, and asparagine 90; these read VTGG…GDVV and DI. Glutathione contacts are provided by residues 95–97 and glutamine 106; that span reads FKV. Serine 140 is a binding site for substrate. Glutathione is bound at residue 193-194; sequence AY. Tyrosine 194 serves as the catalytic Proton acceptor. NADP(+)-binding positions include 194 to 198 and 231 to 233; these read YGVTK and VRT. Lysine 239 is modified (N6-1-carboxyethyl lysine).

It belongs to the short-chain dehydrogenases/reductases (SDR) family. Monomer.

It is found in the cytoplasm. It carries out the reaction a secondary alcohol + NADP(+) = a ketone + NADPH + H(+). It catalyses the reaction prostaglandin F2alpha + NADP(+) = prostaglandin E2 + NADPH + H(+). The enzyme catalyses prostaglandin E1 + NADP(+) = 15-oxoprostaglandin E1 + NADPH + H(+). The catalysed reaction is menadione + NADPH + H(+) = menadiol + NADP(+). It carries out the reaction prostaglandin D2 + NADP(+) = 15-oxoprostaglandin D2 + NADPH + H(+). It catalyses the reaction prostaglandin E2 + NADP(+) = 15-oxoprostaglandin E2 + NADPH + H(+). The enzyme catalyses prostaglandin F2alpha + NADP(+) = 15-oxoprostaglandin F2alpha + NADPH + H(+). The catalysed reaction is daunorubicin + NADPH + H(+) = 13-dihydrodaunorubicin + NADP(+). It carries out the reaction S-nitrosoglutathione + NADPH + H(+) = S-(hydroxysulfenamide)glutathione + NADP(+). It catalyses the reaction a primary alcohol + NADP(+) = an aldehyde + NADPH + H(+). The enzyme catalyses cortisol + NADPH + H(+) = 20beta-dihydrocortisol + NADP(+). The catalysed reaction is corticosterone + NADPH + H(+) = 20beta-dihydrocorticosterone + NADP(+). Its function is as follows. NADPH-dependent reductase with broad substrate specificity. Catalyzes the reduction of a wide variety of carbonyl compounds including quinones, prostaglandins, menadione, plus various xenobiotics. Catalyzes the reduction of the antitumor anthracyclines doxorubicin and daunorubicin to the cardiotoxic compounds doxorubicinol and daunorubicinol. Can convert prostaglandin E to prostaglandin F2-alpha. Can bind glutathione, which explains its higher affinity for glutathione-conjugated substrates. Catalyzes the reduction of S-nitrosoglutathione. In addition, participates in the glucocorticoid metabolism by catalyzing the NADPH-dependent cortisol/corticosterone into 20beta-dihydrocortisol (20b-DHF) or 20beta-corticosterone (20b-DHB), which are weak agonists of NR3C1 and NR3C2 in adipose tissue. The chain is Carbonyl reductase [NADPH] 1 from Pongo abelii (Sumatran orangutan).